We begin with the raw amino-acid sequence, 424 residues long: Zinc finger and BTB domain-containing protein 6 (424 aa).

The region spanning 33–97 is the BTB domain; that stretch reads CDVSIYINDT…CYTGALEVKR (65 aa). Phosphoserine is present on Ser-202. 4 consecutive C2H2-type zinc fingers follow at residues 301-323, 326-348, 354-376, and 382-405; these read HQCPRCPRGFLHVENYLRHLKMH, FLCLQCGKTFTQKKNLNRHIRGH, FQCTVCLKTFTAKSTLQDHLNIH, and YKCHCCDMDFKHKSALKKHLTSVH. The interval 402–424 is disordered; it reads TSVHGRSSGEKLSRPDLKRQSLL. Basic and acidic residues predominate over residues 408–424; the sequence is SSGEKLSRPDLKRQSLL.

In terms of tissue distribution, widely expressed with highest levels in brain.

The protein localises to the nucleus. May be involved in transcriptional regulation. The protein is Zinc finger and BTB domain-containing protein 6 (ZBTB6) of Homo sapiens (Human).